Here is a 564-residue protein sequence, read N- to C-terminus: Pumilio homolog 9 (564 aa).

The PUM-HD domain maps to 222–564 (LEDTVLIGQG…KIFSKTILKK (343 aa)). Pumilio repeat units lie at residues 249–284 (EIYG…VILL), 285–320 (AIID…LIVS), 321–359 (VLTS…ALVK), 361–396 (GLKP…FVLE), 397–432 (AATK…RLVA), 433–469 (EISR…VQFR), 470–501 (MHYA…EIVR), and 502–539 (ELLC…KLVA).

It localises to the cytoplasm. Its function is as follows. Sequence-specific RNA-binding protein that regulates translation and mRNA stability by binding the 3'-UTR of target mRNAs. The polypeptide is Pumilio homolog 9 (APUM9) (Arabidopsis thaliana (Mouse-ear cress)).